The primary structure comprises 436 residues: Trigger factor (436 aa).

The 86-residue stretch at 161–246 (DDQLNIDFVG…VNSVSEPKLP (86 aa)) folds into the PPIase FKBP-type domain.

It belongs to the FKBP-type PPIase family. Tig subfamily.

It localises to the cytoplasm. The catalysed reaction is [protein]-peptidylproline (omega=180) = [protein]-peptidylproline (omega=0). Involved in protein export. Acts as a chaperone by maintaining the newly synthesized protein in an open conformation. Functions as a peptidyl-prolyl cis-trans isomerase. The protein is Trigger factor of Pseudomonas fluorescens (strain ATCC BAA-477 / NRRL B-23932 / Pf-5).